The sequence spans 834 residues: Periplasmic nitrate reductase (834 aa).

Residues 1-31 (MTGELTRREMLKAHAAGIAAATAGIALPAAA) constitute a signal peptide (tat-type signal). The 4Fe-4S Mo/W bis-MGD-type domain maps to 43-99 (ITWSKAPCRFCGTGCGVMVGVKEGQVVATHGDMQAEVNRGLNCIKGYFLSKIMYGTD). C50, C53, C57, and C85 together coordinate [4Fe-4S] cluster. Mo-bis(molybdopterin guanine dinucleotide) is bound by residues K87, Q154, N179, C183, 216-223 (WGSNMAEM), 247-251 (STFTH), 266-268 (GTD), M377, Q381, N487, 513-514 (SD), K536, D563, and 723-732 (TGRVLEHWHS). Substrate is bound at residue W799. Positions 807 and 824 each coordinate Mo-bis(molybdopterin guanine dinucleotide).

This sequence belongs to the prokaryotic molybdopterin-containing oxidoreductase family. NasA/NapA/NarB subfamily. In terms of assembly, component of the periplasmic nitrate reductase NapAB complex composed of NapA and NapB. [4Fe-4S] cluster is required as a cofactor. Requires Mo-bis(molybdopterin guanine dinucleotide) as cofactor. Predicted to be exported by the Tat system. The position of the signal peptide cleavage has not been experimentally proven.

It is found in the periplasm. It catalyses the reaction 2 Fe(II)-[cytochrome] + nitrate + 2 H(+) = 2 Fe(III)-[cytochrome] + nitrite + H2O. Its function is as follows. Catalytic subunit of the periplasmic nitrate reductase complex NapAB. Receives electrons from NapB and catalyzes the reduction of nitrate to nitrite. In Rhizobium meliloti (strain 1021) (Ensifer meliloti), this protein is Periplasmic nitrate reductase.